A 227-amino-acid chain; its full sequence is ATP synthase F(0) complex subunit a (227 aa).

Transmembrane regions (helical) follow at residues 14 to 34 (FLGIPLIALAISIPWLMFPTP), 69 to 89 (WAILFTALMLFLITINLLGLL), 99 to 119 (LSLNMAFALPLWLTTVLIGMF), 139 to 159 (VPVLIIIETISLFIRPLALGV), 165 to 185 (LTAGHLLMQLIATAAFVLLTM), and 190 to 210 (ALLTSLVLFLLTILEVAVAMI).

Belongs to the ATPase A chain family. Component of the ATP synthase complex composed at least of ATP5F1A/subunit alpha, ATP5F1B/subunit beta, ATP5MC1/subunit c (homooctomer), MT-ATP6/subunit a, MT-ATP8/subunit 8, ATP5ME/subunit e, ATP5MF/subunit f, ATP5MG/subunit g, ATP5MK/subunit k, ATP5MJ/subunit j, ATP5F1C/subunit gamma, ATP5F1D/subunit delta, ATP5F1E/subunit epsilon, ATP5PF/subunit F6, ATP5PB/subunit b, ATP5PD/subunit d, ATP5PO/subunit OSCP. ATP synthase complex consists of a soluble F(1) head domain (subunits alpha(3) and beta(3)) - the catalytic core - and a membrane F(0) domain - the membrane proton channel (subunits c, a, 8, e, f, g, k and j). These two domains are linked by a central stalk (subunits gamma, delta, and epsilon) rotating inside the F1 region and a stationary peripheral stalk (subunits F6, b, d, and OSCP). Interacts with DNAJC30; interaction is direct.

The protein resides in the mitochondrion inner membrane. It catalyses the reaction H(+)(in) = H(+)(out). Subunit a, of the mitochondrial membrane ATP synthase complex (F(1)F(0) ATP synthase or Complex V) that produces ATP from ADP in the presence of a proton gradient across the membrane which is generated by electron transport complexes of the respiratory chain. ATP synthase complex consist of a soluble F(1) head domain - the catalytic core - and a membrane F(1) domain - the membrane proton channel. These two domains are linked by a central stalk rotating inside the F(1) region and a stationary peripheral stalk. During catalysis, ATP synthesis in the catalytic domain of F(1) is coupled via a rotary mechanism of the central stalk subunits to proton translocation. With the subunit c (ATP5MC1), forms the proton-conducting channel in the F(0) domain, that contains two crucial half-channels (inlet and outlet) that facilitate proton movement from the mitochondrial intermembrane space (IMS) into the matrix. Protons are taken up via the inlet half-channel and released through the outlet half-channel, following a Grotthuss mechanism. In Scyliorhinus canicula (Small-spotted catshark), this protein is ATP synthase F(0) complex subunit a.